Reading from the N-terminus, the 168-residue chain is MKFFSNFFKNKNNLSSHNVINIFAPISGDIVEIESVPDEVFSNKIVGDGIAISPNSNILLAPINGTIGRIFETLHAFSIKSDDDIELFVHFGIDTVKLKGRGFKKISEENIAVKIGDPIIFIDLPFLKKLVKSTLTPVIISNIDKFKKITKNTGSVIAGKTVIFSVQK.

Residues 38–142 (DEVFSNKIVG…STLTPVIISN (105 aa)) form the PTS EIIA type-1 domain. The Zn(2+) site is built by His75 and His90. The active-site Tele-phosphohistidine intermediate; for EIIA activity is His90. The residue at position 90 (His90) is a Phosphohistidine; by HPr.

It depends on Zn(2+) as a cofactor.

It is found in the cytoplasm. In terms of biological role, the phosphoenolpyruvate-dependent sugar phosphotransferase system (sugar PTS), a major carbohydrate active transport system, catalyzes the phosphorylation of incoming sugar substrates concomitantly with their translocation across the cell membrane. The enzyme II complex composed of PtsG and Crr is involved in glucose transport. This Buchnera aphidicola subsp. Baizongia pistaciae (strain Bp) protein is PTS system glucose-specific EIIA component (crr).